We begin with the raw amino-acid sequence, 876 residues long: Valine--tRNA ligase (876 aa).

Residues 44–54 (PNVTGKLHLGH) carry the 'HIGH' region motif. A 'KMSKS' region motif is present at residues 520-524 (KMSKS). An ATP-binding site is contributed by K523. Residues 805 to 876 (LEGLIDMDKE…VKARIEQLKA (72 aa)) are a coiled coil.

The protein belongs to the class-I aminoacyl-tRNA synthetase family. ValS type 1 subfamily. Monomer.

It localises to the cytoplasm. It carries out the reaction tRNA(Val) + L-valine + ATP = L-valyl-tRNA(Val) + AMP + diphosphate. In terms of biological role, catalyzes the attachment of valine to tRNA(Val). As ValRS can inadvertently accommodate and process structurally similar amino acids such as threonine, to avoid such errors, it has a 'posttransfer' editing activity that hydrolyzes mischarged Thr-tRNA(Val) in a tRNA-dependent manner. In Staphylococcus carnosus (strain TM300), this protein is Valine--tRNA ligase.